The primary structure comprises 1111 residues: NBPF family member NBPF9 (1111 aa).

Residues 70–130 (MLRNERQFKE…RSLNEHLQAL (61 aa)) are a coiled coil. Residues 161–198 (KLSPENDEDEDEDVQVEEDEKVLESSAPREVQKAEESK) are disordered. Residues 165–181 (ENDEDEDEDVQVEEDEK) show a composition bias toward acidic residues. Residues 165-259 (ENDEDEDEDV…ECQDALNILP (95 aa)) enclose the Olduvai 1 domain. A coiled-coil region spans residues 341 to 401 (MLRNERQFKE…RSLNEHLQAL (61 aa)). 8 consecutive Olduvai domains span residues 436-528 (ENDN…HIIP), 529-600 (ENES…VDIG), 601-692 (RHRW…PSCP), 695-750 (SREL…LDLD), 751-843 (RIKK…RSKK), 844-919 (KRRR…LDVD), 920-1012 (RIKK…RSKK), and 1013-1111 (ERRR…IFPQ). 2 disordered regions span residues 451-474 (EKVQ…PEDS) and 510-569 (TLIG…STPS). Acidic residues-rich tracts occupy residues 530-539 (NESDDEEEEE) and 550-562 (ESEE…ESWD). Disordered stretches follow at residues 829–871 (KKGK…LDEK) and 999–1033 (KGKG…PRLN). 2 stretches are compositionally biased toward basic residues: residues 831-849 (GKGK…RRGR) and 1000-1018 (GKGK…RRGR).

This sequence belongs to the NBPF family. As to expression, expressed in a neuroblastoma cell line.

The protein resides in the cytoplasm. This is NBPF family member NBPF9 from Homo sapiens (Human).